Consider the following 309-residue polypeptide: Homoserine O-succinyltransferase (309 aa).

The Acyl-thioester intermediate role is filled by Cys142. 2 residues coordinate substrate: Lys163 and Ser192. His235 functions as the Proton acceptor in the catalytic mechanism. Glu237 is an active-site residue. Arg249 serves as a coordination point for substrate.

The protein belongs to the MetA family.

It is found in the cytoplasm. The enzyme catalyses L-homoserine + succinyl-CoA = O-succinyl-L-homoserine + CoA. It participates in amino-acid biosynthesis; L-methionine biosynthesis via de novo pathway; O-succinyl-L-homoserine from L-homoserine: step 1/1. Functionally, transfers a succinyl group from succinyl-CoA to L-homoserine, forming succinyl-L-homoserine. In Erwinia tasmaniensis (strain DSM 17950 / CFBP 7177 / CIP 109463 / NCPPB 4357 / Et1/99), this protein is Homoserine O-succinyltransferase.